The sequence spans 156 residues: Small ribosomal subunit protein uS7 (156 aa).

The protein belongs to the universal ribosomal protein uS7 family. Part of the 30S ribosomal subunit. Contacts proteins S9 and S11.

Functionally, one of the primary rRNA binding proteins, it binds directly to 16S rRNA where it nucleates assembly of the head domain of the 30S subunit. Is located at the subunit interface close to the decoding center, probably blocks exit of the E-site tRNA. The sequence is that of Small ribosomal subunit protein uS7 from Pectobacterium atrosepticum (strain SCRI 1043 / ATCC BAA-672) (Erwinia carotovora subsp. atroseptica).